The following is a 213-amino-acid chain: Putative nascent polypeptide-associated complex subunit alpha-like protein (213 aa).

Residues 1-46 (MPGEATETVPAIEQQLLQPQAETGSGTESDSDESVPELEEQDSTQV) are disordered. The span at 15–28 (QLLQPQAETGSGTE) shows a compositional bias: polar residues. The segment covering 29 to 42 (SDSDESVPELEEQD) has biased composition (acidic residues). Residues serine 43 and serine 131 each carry the phosphoserine modification. The NAC-A/B domain maps to 69 to 134 (RRSEKKARKA…AKIEDLSQEA (66 aa)). The residue at position 141 (lysine 141) is an N6-acetyllysine; alternate. Lysine 141 participates in a covalent cross-link: Glycyl lysine isopeptide (Lys-Gly) (interchain with G-Cter in SUMO2); alternate. Threonine 160 bears the Phosphothreonine mark. A phosphoserine mark is found at serine 165, serine 185, and serine 201. Positions 175–211 (VEIKDIELVLSQANVWGAKAVRALKNSNDIVNAIMEL) constitute a UBA domain. Residue threonine 212 is modified to Phosphothreonine.

Belongs to the NAC-alpha family.

The polypeptide is Putative nascent polypeptide-associated complex subunit alpha-like protein (Homo sapiens (Human)).